Consider the following 140-residue polypeptide: Large-conductance mechanosensitive channel 2 (140 aa).

The next 3 membrane-spanning stretches (helical) occupy residues 8-28 (FISK…AAFG), 30-50 (IVDS…FGGL), and 81-101 (GSFI…FLMV).

Belongs to the MscL family. Homopentamer.

The protein resides in the cell inner membrane. Functionally, channel that opens in response to stretch forces in the membrane lipid bilayer. May participate in the regulation of osmotic pressure changes within the cell. This Mesorhizobium japonicum (strain LMG 29417 / CECT 9101 / MAFF 303099) (Mesorhizobium loti (strain MAFF 303099)) protein is Large-conductance mechanosensitive channel 2.